The primary structure comprises 275 residues: Putative hydroxypyruvate isomerase (275 aa).

Residues glutamate 147 and glutamate 246 each act as proton donor/acceptor in the active site.

This sequence belongs to the hyi family.

It catalyses the reaction 3-hydroxypyruvate = 2-hydroxy-3-oxopropanoate. Catalyzes the reversible isomerization between hydroxypyruvate and 2-hydroxy-3-oxopropanoate (also termed tartronate semialdehyde). In Xenopus laevis (African clawed frog), this protein is Putative hydroxypyruvate isomerase (hyi).